Reading from the N-terminus, the 367-residue chain is tRNA-specific 2-thiouridylase MnmA (367 aa).

ATP contacts are provided by residues Gly-13–Ser-20 and Met-39. The interaction with target base in tRNA stretch occupies residues Asn-99–Asp-101. Cys-104 acts as the Nucleophile in catalysis. A disulfide bridge links Cys-104 with Cys-200. An ATP-binding site is contributed by Gly-128. Residues Lys-150 to Gln-152 form an interaction with tRNA region. Cys-200 serves as the catalytic Cysteine persulfide intermediate. The segment at Arg-307–Tyr-308 is interaction with tRNA.

The protein belongs to the MnmA/TRMU family.

It is found in the cytoplasm. The catalysed reaction is S-sulfanyl-L-cysteinyl-[protein] + uridine(34) in tRNA + AH2 + ATP = 2-thiouridine(34) in tRNA + L-cysteinyl-[protein] + A + AMP + diphosphate + H(+). Catalyzes the 2-thiolation of uridine at the wobble position (U34) of tRNA, leading to the formation of s(2)U34. This Neisseria meningitidis serogroup B (strain ATCC BAA-335 / MC58) protein is tRNA-specific 2-thiouridylase MnmA.